The sequence spans 173 residues: Eggshell protein (173 aa).

A signal peptide spans 1–18 (MKQSLTLVFLVAIGYATA). Gly residues predominate over residues 145–162 (GSGKGKGGGKGGKGGKGG). The disordered stretch occupies residues 145–173 (GSGKGKGGGKGGKGGKGGTYKPSHYGGGY).

This is Eggshell protein from Schistosoma mansoni (Blood fluke).